We begin with the raw amino-acid sequence, 299 residues long: Nucleotide-binding protein Moth_0258 (299 aa).

14–21 (GLSGAGKT) provides a ligand contact to ATP. Position 68–71 (68–71 (DIRG)) interacts with GTP.

This sequence belongs to the RapZ-like family.

Displays ATPase and GTPase activities. In Moorella thermoacetica (strain ATCC 39073 / JCM 9320), this protein is Nucleotide-binding protein Moth_0258.